The following is a 264-amino-acid chain: Thiazole synthase (264 aa).

Lys-106 (schiff-base intermediate with DXP) is an active-site residue. Residues Gly-167, 193-194 (AG), and 215-216 (NT) each bind 1-deoxy-D-xylulose 5-phosphate.

The protein belongs to the ThiG family. As to quaternary structure, homotetramer. Forms heterodimers with either ThiH or ThiS.

Its subcellular location is the cytoplasm. The catalysed reaction is [ThiS sulfur-carrier protein]-C-terminal-Gly-aminoethanethioate + 2-iminoacetate + 1-deoxy-D-xylulose 5-phosphate = [ThiS sulfur-carrier protein]-C-terminal Gly-Gly + 2-[(2R,5Z)-2-carboxy-4-methylthiazol-5(2H)-ylidene]ethyl phosphate + 2 H2O + H(+). The protein operates within cofactor biosynthesis; thiamine diphosphate biosynthesis. Its function is as follows. Catalyzes the rearrangement of 1-deoxy-D-xylulose 5-phosphate (DXP) to produce the thiazole phosphate moiety of thiamine. Sulfur is provided by the thiocarboxylate moiety of the carrier protein ThiS. In vitro, sulfur can be provided by H(2)S. This chain is Thiazole synthase, found in Stenotrophomonas maltophilia (strain K279a).